The sequence spans 587 residues: General negative regulator of transcription subunit 4 (587 aa).

The RING-type zinc-finger motif lies at 33–78 (CPLCIEPMDITDKNFFPCPCGYQICQFCYNNIRQNPELNGRCPACR). A coiled-coil region spans residues 94–128 (EELKMERAKLARKEKERKHREKERKENEYTNRKHL). In terms of domain architecture, RRM spans 137 to 228 (NLVYVVGINP…YMDGRLIKAA (92 aa)). A C3H1-type zinc finger spans residues 229–256 (YGTTKYCSSYLRGLPCPNPNCMFLHEPG). Lysine 270 is covalently cross-linked (Glycyl lysine isopeptide (Lys-Gly) (interchain with G-Cter in ubiquitin)). Phosphothreonine is present on threonine 310. Serine 312 is modified (phosphoserine). Phosphothreonine is present on threonine 326. Position 360 is a phosphoserine (serine 360). The segment at 370 to 412 (TLNDSLGHHTTPTTENTITSTTTTTNTNATSHSHGSKKKQSLA) is disordered. Over residues 377–402 (HHTTPTTENTITSTTTTTNTNATSHS) the composition is skewed to low complexity.

In terms of assembly, forms a NOT protein complex that comprises NOT1, NOT2, NOT3, NOT4 and NOT5. Subunit of the 1.0 MDa CCR4-NOT core complex that contains CCR4, CAF1, NOT1, NOT2, NOT3, NOT4, NOT5, CAF40 and CAF130. In the complex interacts with NOT1. The core complex probably is part of a less characterized 1.9 MDa CCR4-NOT complex.

It is found in the cytoplasm. The protein resides in the nucleus. The enzyme catalyses S-ubiquitinyl-[E2 ubiquitin-conjugating enzyme]-L-cysteine + [acceptor protein]-L-lysine = [E2 ubiquitin-conjugating enzyme]-L-cysteine + N(6)-ubiquitinyl-[acceptor protein]-L-lysine.. The protein operates within protein modification; protein ubiquitination. Functionally, E3 ubiquitin-protein ligase component of the CCR4-NOT core complex, which in the nucleus seems to be a general transcription factor, and in the cytoplasm the major mRNA deadenylase involved in mRNA turnover. The NOT protein subcomplex negatively regulates the basal and activated transcription of many genes. Preferentially affects TC-type TATA element-dependent transcription. Could directly or indirectly inhibit component(s) of the general transcription machinery. In the cytoplasm, catalyzes monoubiquitination of RPS7/es7 in response to stalled ribosomes, initiating a HEL2-dependent response that activates the No-Go Decay (NGD) pathway. In Saccharomyces cerevisiae (strain ATCC 204508 / S288c) (Baker's yeast), this protein is General negative regulator of transcription subunit 4 (MOT2).